Reading from the N-terminus, the 533-residue chain is Lanosterol 14-alpha demethylase (533 aa).

Cys-472 is a heme binding site.

Belongs to the cytochrome P450 family. It depends on heme as a cofactor.

It is found in the membrane. It catalyses the reaction a 14alpha-methyl steroid + 3 reduced [NADPH--hemoprotein reductase] + 3 O2 = a Delta(14) steroid + formate + 3 oxidized [NADPH--hemoprotein reductase] + 4 H2O + 4 H(+). The enzyme catalyses a 14alpha-methyl steroid + reduced [NADPH--hemoprotein reductase] + O2 = a 14alpha-hydroxymethyl steroid + oxidized [NADPH--hemoprotein reductase] + H2O + H(+). It carries out the reaction a 14alpha-hydroxymethyl steroid + reduced [NADPH--hemoprotein reductase] + O2 = a 14alpha-formyl steroid + oxidized [NADPH--hemoprotein reductase] + 2 H2O + H(+). The catalysed reaction is a 14alpha-formyl steroid + reduced [NADPH--hemoprotein reductase] + O2 = a Delta(14) steroid + formate + oxidized [NADPH--hemoprotein reductase] + H2O + 2 H(+). It catalyses the reaction lanosterol + 3 reduced [NADPH--hemoprotein reductase] + 3 O2 = 4,4-dimethyl-5alpha-cholesta-8,14,24-trien-3beta-ol + formate + 3 oxidized [NADPH--hemoprotein reductase] + 4 H2O + 4 H(+). The enzyme catalyses lanosterol + reduced [NADPH--hemoprotein reductase] + O2 = 32-hydroxylanosterol + oxidized [NADPH--hemoprotein reductase] + H2O + H(+). It carries out the reaction 32-hydroxylanosterol + reduced [NADPH--hemoprotein reductase] + O2 = 32-oxolanosterol + oxidized [NADPH--hemoprotein reductase] + 2 H2O + H(+). The catalysed reaction is 32-oxolanosterol + reduced [NADPH--hemoprotein reductase] + O2 = 4,4-dimethyl-5alpha-cholesta-8,14,24-trien-3beta-ol + formate + oxidized [NADPH--hemoprotein reductase] + H2O + 2 H(+). It catalyses the reaction eburicol + 3 reduced [NADPH--hemoprotein reductase] + 3 O2 = 14-demethyleburicol + formate + 3 oxidized [NADPH--hemoprotein reductase] + 4 H2O + 4 H(+). The enzyme catalyses eburicol + reduced [NADPH--hemoprotein reductase] + O2 = 32-hydroxyeburicol + oxidized [NADPH--hemoprotein reductase] + H2O + H(+). It carries out the reaction 32-hydroxyeburicol + reduced [NADPH--hemoprotein reductase] + O2 = 32-oxoeburicol + oxidized [NADPH--hemoprotein reductase] + 2 H2O + H(+). The catalysed reaction is 32-oxoeburicol + reduced [NADPH--hemoprotein reductase] + O2 = 14-demethyleburicol + formate + oxidized [NADPH--hemoprotein reductase] + H2O + 2 H(+). It functions in the pathway steroid biosynthesis; zymosterol biosynthesis; zymosterol from lanosterol: step 1/6. Functionally, sterol 14alpha-demethylase that plays a critical role in the third module of ergosterol biosynthesis pathway, being ergosterol the major sterol component in fungal membranes that participates in a variety of functions. The third module or late pathway involves the ergosterol synthesis itself through consecutive reactions that mainly occur in the endoplasmic reticulum (ER) membrane. In filamentous fungi, during the initial step of this module, lanosterol (lanosta-8,24-dien-3beta-ol) can be metabolized to eburicol. Sterol 14alpha-demethylase catalyzes the three-step oxidative removal of the 14alpha-methyl group (C-32) of both these sterols in the form of formate, and converts eburicol and lanosterol to 14-demethyleburicol (4,4,24-trimethylergosta-8,14,24(28)-trienol) and 4,4-dimethyl-5alpha-cholesta-8,14,24-trien-3beta-ol, respectively, which are further metabolized by other enzymes in the pathway to ergosterol. Can also use substrates not intrinsic to fungi, such as 24,25-dihydrolanosterol (DHL), producing 4,4-dimethyl-8,14-cholestadien-3-beta-ol, but at lower rates than the endogenous substrates. This Candida glabrata (strain ATCC 2001 / BCRC 20586 / JCM 3761 / NBRC 0622 / NRRL Y-65 / CBS 138) (Yeast) protein is Lanosterol 14-alpha demethylase (ERG11).